The chain runs to 520 residues: Amine oxidase [flavin-containing] B (520 aa).

Ser-2 carries the post-translational modification N-acetylserine. Residues 2-489 are Cytoplasmic-facing; sequence SNKSDVIVVG…TFLERHLPSV (488 aa). Lys-52 and Lys-248 each carry N6-acetyllysine. Cys-397 is subject to S-8alpha-FAD cysteine. The chain crosses the membrane as a helical; Anchor for type IV membrane protein span at residues 490–516; the sequence is PGLLKLFGLTTILSATALGFLAHKRGL. Topologically, residues 517-520 are mitochondrial intermembrane; that stretch reads FVHF.

The protein belongs to the flavin monoamine oxidase family. As to quaternary structure, monomer, homo- or heterodimer (containing two subunits of similar size). Each subunit contains a covalently bound flavin. Enzymatically active as monomer. It depends on FAD as a cofactor.

The protein resides in the mitochondrion outer membrane. The enzyme catalyses a secondary aliphatic amine + O2 + H2O = a primary amine + an aldehyde + H2O2. The catalysed reaction is (R)-adrenaline + O2 + H2O = (R)-3,4-dihydroxymandelaldehyde + methylamine + H2O2. It catalyses the reaction a primary methyl amine + O2 + H2O = an aldehyde + H2O2 + NH4(+). It carries out the reaction benzylamine + O2 + H2O = benzaldehyde + H2O2 + NH4(+). The enzyme catalyses dopamine + O2 + H2O = 3,4-dihydroxyphenylacetaldehyde + H2O2 + NH4(+). The catalysed reaction is tyramine + O2 + H2O = (4-hydroxyphenyl)acetaldehyde + H2O2 + NH4(+). It catalyses the reaction (R)-noradrenaline + O2 + H2O = (R)-3,4-dihydroxymandelaldehyde + H2O2 + NH4(+). It carries out the reaction 2-phenylethylamine + O2 + H2O = 2-phenylacetaldehyde + H2O2 + NH4(+). The enzyme catalyses N-acetylputrescine + O2 + H2O = 4-acetamidobutanal + H2O2 + NH4(+). Its function is as follows. Catalyzes the oxidative deamination of primary and some secondary amines such as neurotransmitters, and exogenous amines including the tertiary amine, neurotoxin 1-methyl-4-phenyl-1,2,3,6-tetrahydropyridine (MPTP), with concomitant reduction of oxygen to hydrogen peroxide and participates in the metabolism of neuroactive and vasoactive amines in the central nervous system and peripheral tissues. Preferentially degrades benzylamine and phenylethylamine. This is Amine oxidase [flavin-containing] B from Mus musculus (Mouse).